The primary structure comprises 327 residues: Cysteine synthase (327 aa).

K65 carries the post-translational modification N6-(pyridoxal phosphate)lysine. Residues N95, 200-204, and S282 each bind pyridoxal 5'-phosphate; that span reads GTGGT.

Belongs to the cysteine synthase/cystathionine beta-synthase family. Pyridoxal 5'-phosphate serves as cofactor.

It carries out the reaction O-acetyl-L-serine + hydrogen sulfide = L-cysteine + acetate. The protein operates within amino-acid biosynthesis; L-cysteine biosynthesis; L-cysteine from L-serine: step 2/2. This is Cysteine synthase (cysM) from Aquifex aeolicus (strain VF5).